We begin with the raw amino-acid sequence, 414 residues long: Protein phosphatase 2C homolog 3 (414 aa).

The region spanning 23–288 (LYGLSSMQGW…DNMTVCIVAL (266 aa)) is the PPM-type phosphatase domain. Residues Asp62, Gly63, Asp230, and Asp279 each coordinate Mn(2+). 2 disordered regions span residues 313-368 (APPE…TNGS) and 380-414 (FPHK…SAAD). A compositionally biased stretch (basic and acidic residues) spans 350-363 (GYDKDANENSKEDD). Residues 390 to 400 (SSETDIVNSNK) are compositionally biased toward polar residues. The segment covering 401–414 (DVADDHKEAVSAAD) has biased composition (basic and acidic residues).

The protein belongs to the PP2C family. Monomer. Mg(2+) is required as a cofactor. The cofactor is Mn(2+).

Its subcellular location is the cytoplasm. It is found in the nucleus. It catalyses the reaction O-phospho-L-seryl-[protein] + H2O = L-seryl-[protein] + phosphate. The catalysed reaction is O-phospho-L-threonyl-[protein] + H2O = L-threonyl-[protein] + phosphate. Dephosphorylating regulator for many key proteins. Has an important role in osmotic stability and cell shape control. It may negatively regulate the osmosensing signal transmitted through wis1 map kinase. The chain is Protein phosphatase 2C homolog 3 (ptc3) from Schizosaccharomyces pombe (strain 972 / ATCC 24843) (Fission yeast).